The chain runs to 330 residues: Putative glycosyltransferase ORF330 (330 aa).

It belongs to the glycosyltransferase group 1 family. Glycosyltransferase 4 subfamily.

In Acidianus filamentous virus 2 (isolate Italy/Pozzuoli) (AFV-2), this protein is Putative glycosyltransferase ORF330.